A 163-amino-acid polypeptide reads, in one-letter code: Bursicon (163 aa).

A signal peptide spans 1–23; it reads MKSSVCVLLKVLACILLPGGLNA. 5 disulfides stabilise this stretch: cysteine 39/cysteine 88, cysteine 53/cysteine 102, cysteine 63/cysteine 123, cysteine 67/cysteine 125, and cysteine 85/cysteine 128. The CTCK domain occupies 39 to 129; that stretch reads CQVTPVIHVL…PLECMCRPCT (91 aa).

Heterodimer of burs and pburs.

The protein localises to the secreted. Final heterodimeric neurohormone released at the end of the molting cycle, involved in the sclerotization (tanning) of the insect cuticle, melanization and wing spreading. The protein is Bursicon of Aedes aegypti (Yellowfever mosquito).